Consider the following 184-residue polypeptide: Small ribosomal subunit protein uS4c (184 aa).

Residues 82–143 (MRLDNILFRL…KQRSKALIQN (62 aa)) enclose the S4 RNA-binding domain.

This sequence belongs to the universal ribosomal protein uS4 family. In terms of assembly, part of the 30S ribosomal subunit. Contacts protein S5. The interaction surface between S4 and S5 is involved in control of translational fidelity.

It is found in the plastid. The protein resides in the chloroplast. Its function is as follows. One of the primary rRNA binding proteins, it binds directly to 16S rRNA where it nucleates assembly of the body of the 30S subunit. Functionally, with S5 and S12 plays an important role in translational accuracy. This Patersonia fragilis (Short purple-flag) protein is Small ribosomal subunit protein uS4c (rps4).